Here is a 1228-residue protein sequence, read N- to C-terminus: DNA-directed RNA polymerase subunit beta'' (1228 aa).

Zn(2+) contacts are provided by cysteine 222, cysteine 296, cysteine 303, and cysteine 306.

The protein belongs to the RNA polymerase beta' chain family. RpoC2 subfamily. In terms of assembly, in plastids the minimal PEP RNA polymerase catalytic core is composed of four subunits: alpha, beta, beta', and beta''. When a (nuclear-encoded) sigma factor is associated with the core the holoenzyme is formed, which can initiate transcription. Requires Zn(2+) as cofactor.

It is found in the plastid. It localises to the chloroplast. The enzyme catalyses RNA(n) + a ribonucleoside 5'-triphosphate = RNA(n+1) + diphosphate. Its function is as follows. DNA-dependent RNA polymerase catalyzes the transcription of DNA into RNA using the four ribonucleoside triphosphates as substrates. In Gracilaria tenuistipitata var. liui (Red alga), this protein is DNA-directed RNA polymerase subunit beta''.